Consider the following 540-residue polypeptide: Kinesin light chain (540 aa).

Residues 34-138 are a coiled coil; the sequence is LETSVKGVKE…NKHLKYMASI (105 aa). TPR repeat units lie at residues 206 to 239, 248 to 281, 290 to 323, 332 to 365, 374 to 407, and 456 to 489; these read LRTL…LEKT, ATML…REKC, AATL…REKV, AKQL…YESK, AKTK…AHER, and TTTL…KKQH.

The protein belongs to the kinesin light chain family. As to quaternary structure, oligomeric complex composed of two heavy chains and two light chains. Interacts with unc-83; the interaction is direct. Interacts with unc-33; the interaction regulates unc-33 neurite localization. Interacts with casy-1.

It localises to the cytoplasm. The protein resides in the cytoskeleton. It is found in the nucleus envelope. Functionally, kinesin is a microtubule-associated force-producing protein that may play a role in organelle transport. The light chain may function in coupling of cargo to the heavy chain or in the modulation of its ATPase activity. Recruits unc-83 (within the unc-83-unc-84 LINC complex) to the nuclear envelope during nuclear migration to mediate the link between the nuclear envelope and the microtubule cytoskeleton in hypodermal precursor cells. This chain is Kinesin light chain, found in Caenorhabditis elegans.